Here is a 398-residue protein sequence, read N- to C-terminus: MATTLATDVRLSIAHQTRFALRLASTISSNPKSAASNAVFSPVSLHVALSLLAAGAGSATRDQLVATLGTGEVEGLHALAEQVVQFVLADASSAGGPHVAFANGVFVDASLPLKPSFQELAVCKYKADTQSVDFQTKAAEVATQVNSWVEKVTSGRIKDILPSGSVDNTTKLVLANALYFKGAWTDQFDSSGTKNDYFYLPDGSSVQTPFMSSMDDQYLSSSDGLKVLKLPYKQGGDKRQFSMYILLPEAPGGLSNLAEKLSAEPDFLERHIPRQRVALRQFKLPKFKISFETEASDLLKCLGLQLPFSNEADFSEMVDSPMAHGLRVSSVFHQAFVEVNEQGTEAAASTAIKMALLQARPPSVMDFIADHPFLFLLREDISGVVLFMGHVVNPLLSS.

Positions 343–367 are RCL; the sequence is GTEAAASTAIKMALLQARPPSVMDF.

It belongs to the serpin family.

Functionally, inhibits chymotrypsin and cathepsin G in vitro. The polypeptide is Serpin-Z1C (Triticum aestivum (Wheat)).